The primary structure comprises 176 residues: Glycine-rich RNA-binding protein 7 (176 aa).

Ala-2 is subject to N-acetylalanine. The tract at residues 2-41 (ASGDVEYRCFVGGLAWATDDRALETAFAQYGDVIDSKIIN) is required for RNA chaperone activity. The RRM domain occupies 8-86 (YRCFVGGLAW…RSITVNEAQS (79 aa)). The residue at position 49 (Arg-49) is an ADP-ribosylarginine; by HopU1. The segment at 83-103 (EAQSRGSGGGGGHRGGGGGGY) is disordered. Residues 88–103 (GSGGGGGHRGGGGGGY) are compositionally biased toward gly residues. The interval 88–175 (GSGGGGGHRG…GYGGSGGGGG (88 aa)) is glycine-rich (GR) required for cell-to-cell movement. Residues 97–148 (GGGGGGYRSGGGGGYSGGGGSYGGGGGRREGGGGYSGGGGGYSSRGGGGGSY) form a nuclear targeting sequence (M9) region. Ser-105 and Ser-117 each carry phosphoserine. The segment at 131–176 (YSGGGGGYSSRGGGGGSYGGGRREGGGGYGGGEGGGYGGSGGGGGW) is disordered.

It belongs to the GR-RBP family. Interacts with TRN1. Interacts with the Pseudomonas syringae type III effector HopU1. Binds to small phloem-mobile single-stranded RNAs (ss-sRNA, e.g. small interfering RNA (siRNA) and microRNA (miRNA)) in the phloeme exudate, including viral-derived sRNA (vsiRNA). ADP-ribosylated by the Pseudomonas syringae type III effector HopU1. ADP-ribosylation reduces the ability of the protein to bind RNA. Ubiquitous with strong expression in guard cell.

It localises to the cytoplasm. Its subcellular location is the nucleus. The protein localises to the secreted. Plays a role in RNA transcription or processing during stress. Binds RNAs and DNAs sequence with a preference to single-stranded nucleic acids. Displays strong affinity to poly(U) and poly(G) sequence. Involved in mRNA alternative splicing of numerous targets by modulating splice site selection. Negatively regulates the circadian oscillations of its own transcript as well as RBG8 transcript. Forms an interlocked post-transcriptional negative feedback loop with the RBG8 autoregulatory circuit. Both proteins negatively autoregulate and reciprocally crossregulate by binding to their pre-mRNAs and promoting unproductive splicing coupled to degradation via the NMD pathway. Involved in the regulation of abscisic acid and stress responses. Affects the growth and stress tolerance under high salt and dehydration stress conditions, and also confers freezing tolerance, particularly via the regulation of stomatal opening and closing in the guard cells. Exhibits RNA chaperone activity during the cold adaptation process. Involved in the export of mRNAs from the nucleus to the cytoplasm under cold stress conditions. Target of the Pseudomonas syringae type III effector HopU1, which could probably be involved in plant innate immunity. Component of the flowering autonomous pathway which promotes floral transition, at least partly by down-regulating FLC. Mediates cell-to-cell trafficking of RNA interference (RNAi) signals (small RNAs (sRNA), e.g. small interfering RNA (siRNA) and microRNA (miRNA)) which regulate growth and development, as well as responses to environmental inputs, including pathogen attack; can compromise zucchini yellow mosaic virus (ZYMV) and tobacco rattle virus (TRV) infections at the early stage. The protein is Glycine-rich RNA-binding protein 7 of Arabidopsis thaliana (Mouse-ear cress).